The following is a 704-amino-acid chain: Tryptophan synthase (704 aa).

The interval 1–292 is tryptophan synthase alpha chain; it reads MEAIKKVFEQ…QLTPNAETAK (292 aa). Active-site proton acceptor residues include Glu49 and Asp60. The segment at 293–704 is tryptophan synthase beta chain; sequence GVENILPARF…HVSSNAIPSK (412 aa). Lys380 carries the post-translational modification N6-(pyridoxal phosphate)lysine.

In the N-terminal section; belongs to the TrpA family. This sequence in the C-terminal section; belongs to the TrpB family. Requires pyridoxal 5'-phosphate as cofactor.

The enzyme catalyses (1S,2R)-1-C-(indol-3-yl)glycerol 3-phosphate + L-serine = D-glyceraldehyde 3-phosphate + L-tryptophan + H2O. The protein operates within amino-acid biosynthesis; L-tryptophan biosynthesis; L-tryptophan from chorismate: step 5/5. This Coprinopsis cinerea (strain Okayama-7 / 130 / ATCC MYA-4618 / FGSC 9003) (Inky cap fungus) protein is Tryptophan synthase (TRP-1).